Reading from the N-terminus, the 224-residue chain is Thymidine kinase, cytosolic (224 aa).

The residue at position 13 (serine 13) is a Phosphoserine. Residues 26-33 (GPMFSGKS), 58-60 (DTR), and 98-101 (DEGQ) each bind ATP. The active-site Proton acceptor is the glutamate 99. Residue phenylalanine 129 participates in substrate binding. 2 residues coordinate Zn(2+): cysteine 154 and cysteine 157. Residues 173 to 177 (VEVIG) and tyrosine 182 contribute to the substrate site. Positions 186 and 189 each coordinate Zn(2+). The short motif at 203 to 205 (KEN) is the KEN box element.

The protein belongs to the thymidine kinase family. Homotetramer. Tetramerization from dimerization is induced by ATP and increases catalytic efficiency due to a high affinity for thymidine. Tetramerization is inhibited by phosphorylation at Ser-13. Interacts (via the KEN box) with FZR1. Post-translationally, phosphorylated on Ser-13 in mitosis. Phosphorylation of Ser-13 by CDK1 during mitosis reduces homotetramerization and catalytic efficiency when DNA replication is complete and intracellular TK1 is still present at a high level. In terms of processing, polyubiquitinated. Postmitosis, ubiquitination leads to proteasomal degradation. The KEN box sequence located at the C-terminal region targets for degradation by the anaphase promoting complex (APC/C) activated and rate-limited by FZR1.

It is found in the cytoplasm. The enzyme catalyses thymidine + ATP = dTMP + ADP + H(+). In terms of biological role, cell-cycle-regulated enzyme of importance in nucleotide metabolism. Catalyzes the first enzymatic step in the salvage pathway converting thymidine into thymidine monophosphate. Transcriptional regulation limits expression to the S phase of the cell cycle and transient expression coincides with the oscillation in the intracellular dTTP concentration. The sequence is that of Thymidine kinase, cytosolic (TK1) from Gallus gallus (Chicken).